The primary structure comprises 418 residues: Serine hydroxymethyltransferase (418 aa).

(6S)-5,6,7,8-tetrahydrofolate contacts are provided by residues L121 and 125–127 (GHL). K230 carries the N6-(pyridoxal phosphate)lysine modification. 356-358 (SPF) is a binding site for (6S)-5,6,7,8-tetrahydrofolate.

The protein belongs to the SHMT family. As to quaternary structure, homodimer. The cofactor is pyridoxal 5'-phosphate.

It is found in the cytoplasm. It carries out the reaction (6R)-5,10-methylene-5,6,7,8-tetrahydrofolate + glycine + H2O = (6S)-5,6,7,8-tetrahydrofolate + L-serine. The protein operates within one-carbon metabolism; tetrahydrofolate interconversion. It functions in the pathway amino-acid biosynthesis; glycine biosynthesis; glycine from L-serine: step 1/1. In terms of biological role, catalyzes the reversible interconversion of serine and glycine with tetrahydrofolate (THF) serving as the one-carbon carrier. This reaction serves as the major source of one-carbon groups required for the biosynthesis of purines, thymidylate, methionine, and other important biomolecules. Also exhibits THF-independent aldolase activity toward beta-hydroxyamino acids, producing glycine and aldehydes, via a retro-aldol mechanism. The polypeptide is Serine hydroxymethyltransferase (Shewanella sediminis (strain HAW-EB3)).